The sequence spans 274 residues: Thiazole synthase (274 aa).

The active-site Schiff-base intermediate with DXP is the Lys115. 1-deoxy-D-xylulose 5-phosphate-binding positions include Gly176, 202–203 (AG), and 224–225 (NS).

This sequence belongs to the ThiG family. As to quaternary structure, homotetramer. Forms heterodimers with either ThiH or ThiS.

Its subcellular location is the cytoplasm. The enzyme catalyses [ThiS sulfur-carrier protein]-C-terminal-Gly-aminoethanethioate + 2-iminoacetate + 1-deoxy-D-xylulose 5-phosphate = [ThiS sulfur-carrier protein]-C-terminal Gly-Gly + 2-[(2R,5Z)-2-carboxy-4-methylthiazol-5(2H)-ylidene]ethyl phosphate + 2 H2O + H(+). It functions in the pathway cofactor biosynthesis; thiamine diphosphate biosynthesis. In terms of biological role, catalyzes the rearrangement of 1-deoxy-D-xylulose 5-phosphate (DXP) to produce the thiazole phosphate moiety of thiamine. Sulfur is provided by the thiocarboxylate moiety of the carrier protein ThiS. In vitro, sulfur can be provided by H(2)S. The protein is Thiazole synthase of Psychrobacter arcticus (strain DSM 17307 / VKM B-2377 / 273-4).